A 1062-amino-acid polypeptide reads, in one-letter code: Exportin-T (1062 aa).

The protein belongs to the exportin family.

It is found in the nucleus. It localises to the cytoplasm. TRNA nucleus export receptor which facilitates tRNA translocation across the nuclear pore complex. Involved in pre-tRNA splicing, probably by affecting the interaction of pre-tRNA with splicing endonuclease. This is Exportin-T (LOS1) from Vanderwaltozyma polyspora (strain ATCC 22028 / DSM 70294 / BCRC 21397 / CBS 2163 / NBRC 10782 / NRRL Y-8283 / UCD 57-17) (Kluyveromyces polysporus).